We begin with the raw amino-acid sequence, 489 residues long: Leukocyte immunoglobulin-like receptor subfamily A member 1 (489 aa).

A signal peptide spans 1-16 (MTPIVTVLICLRLSLG). Residues 17-461 (PRTHVQAGTL…SHPQDYTVEN (445 aa)) lie on the Extracellular side of the membrane. Ig-like C2-type domains lie at 27 to 116 (PKPT…PLEL), 119 to 224 (TGAY…GVSK), 226 to 315 (PSLS…DPLD), and 326 to 415 (PFIS…SDSL). Cys-49 and Cys-98 are joined by a disulfide. Asn-140 carries N-linked (GlcNAc...) asparagine glycosylation. 3 cysteine pairs are disulfide-bonded: Cys-145–Cys-197, Cys-157–Cys-167, and Cys-246–Cys-297. 3 N-linked (GlcNAc...) asparagine glycosylation sites follow: Asn-281, Asn-302, and Asn-341. Cys-346 and Cys-397 are joined by a disulfide. Residues 425–453 (TLSPPQNKSDSKAGAANTLSPSQNKTASH) form a disordered region. 2 N-linked (GlcNAc...) asparagine glycosylation sites follow: Asn-431 and Asn-448. Residues 441 to 453 (NTLSPSQNKTASH) show a composition bias toward polar residues. The helical transmembrane segment at 462–482 (LIRMGIAGLVLVVLGILLFEA) threads the bilayer. Residues 483–489 (QHSQRSL) lie on the Cytoplasmic side of the membrane.

Detected in monocytes and B-cells.

It is found in the membrane. In terms of biological role, may act as receptor for class I MHC antigens. The polypeptide is Leukocyte immunoglobulin-like receptor subfamily A member 1 (LILRA1) (Homo sapiens (Human)).